The chain runs to 88 residues: Small ribosomal subunit protein uS15 (88 aa).

This sequence belongs to the universal ribosomal protein uS15 family. Part of the 30S ribosomal subunit. Forms a bridge to the 50S subunit in the 70S ribosome, contacting the 23S rRNA.

In terms of biological role, one of the primary rRNA binding proteins, it binds directly to 16S rRNA where it helps nucleate assembly of the platform of the 30S subunit by binding and bridging several RNA helices of the 16S rRNA. Functionally, forms an intersubunit bridge (bridge B4) with the 23S rRNA of the 50S subunit in the ribosome. The sequence is that of Small ribosomal subunit protein uS15 from Geotalea daltonii (strain DSM 22248 / JCM 15807 / FRC-32) (Geobacter daltonii).